The chain runs to 274 residues: Transcription factor MYB32 (274 aa).

HTH myb-type domains are found at residues 9-61 (KDHT…INYL) and 62-116 (RPDL…KRKL). 2 consecutive DNA-binding regions (H-T-H motif) follow at residues 37–61 (WRSL…INYL) and 89–112 (WSLI…NTHV). The disordered stretch occupies residues 123–144 (PATHRPINETKTSQDSSDSSKT).

Mostly expressed in roots, and, to a lower extent, in stems, flower buds, and siliques.

Its subcellular location is the nucleus. The polypeptide is Transcription factor MYB32 (MYB32) (Arabidopsis thaliana (Mouse-ear cress)).